Here is a 968-residue protein sequence, read N- to C-terminus: RNA polymerase-associated protein RapA (968 aa).

Residues 164–334 (EVGQRHAPRV…FARLRLLDPD (171 aa)) enclose the Helicase ATP-binding domain. 177-184 (DEVGLGKT) contributes to the ATP binding site. Positions 280–283 (DEAH) match the DEAH box motif. The Helicase C-terminal domain maps to 490–644 (RVEWLLNYLV…TCPTGRTIYD (155 aa)).

The protein belongs to the SNF2/RAD54 helicase family. RapA subfamily. As to quaternary structure, interacts with the RNAP. Has a higher affinity for the core RNAP than for the holoenzyme. Its ATPase activity is stimulated by binding to RNAP.

Its function is as follows. Transcription regulator that activates transcription by stimulating RNA polymerase (RNAP) recycling in case of stress conditions such as supercoiled DNA or high salt concentrations. Probably acts by releasing the RNAP, when it is trapped or immobilized on tightly supercoiled DNA. Does not activate transcription on linear DNA. Probably not involved in DNA repair. The polypeptide is RNA polymerase-associated protein RapA (Yersinia pestis bv. Antiqua (strain Antiqua)).